The chain runs to 213 residues: Large ribosomal subunit protein uL18c (213 aa).

The protein belongs to the universal ribosomal protein uL18 family.

Its subcellular location is the plastid. The protein localises to the apicoplast. The chain is Large ribosomal subunit protein uL18c (RPL18) from Plasmodium falciparum (isolate 3D7).